A 384-amino-acid polypeptide reads, in one-letter code: F-box only protein 5-B (384 aa).

Disordered regions lie at residues 1–20 (MMCG…KSSA) and 79–106 (DEEN…ETDS). Positions 9–19 (PSPKKLLSKSS) are enriched in low complexity. Over residues 83-99 (SSLQDSGYSSILQNDSP) the composition is skewed to polar residues. An F-box domain is found at 191–238 (AELFHRDFKHLLTKILRHLNAMDLINVIGVSTTWRKILQKDNWAYNTY). The ZBR-type zinc-finger motif lies at 311–359 (SLKACVDCGSPAKYDSYLHRAICTRESCKLDFCTLCSCKYHSSKSCLIS). Positions 315, 318, 333, 338, 343, 346, 351, and 356 each coordinate Zn(2+).

Part of a SCF (SKP1-cullin-F-box) protein ligase complex. Interacts with btrc. Interacts with skp1. Interacts with cdc20. Interacts with pin1; stabilizes fbxo5 by preventing its association with btrc in an isomerization-dependent pathway; this interaction is present during G2 phase and prevents fbxo5 degradation. Interacts with plk1. In terms of processing, proteolysed; proteolysis is induced by both cyclin B-cdk1 and cyclin A-cdk1/2 complex through probable phosphorylation. Proteolysis is inhibited by pin1 during G2.

The protein resides in the nucleus. It localises to the cytoplasm. The protein localises to the cytoskeleton. Its subcellular location is the spindle. It is found in the microtubule organizing center. The protein resides in the centrosome. Its pathway is protein modification; protein ubiquitination. Regulates progression through early mitosis by inhibiting the anaphase promoting complex/cyclosome (APC). Binds to the APC activators cdc20 to prevent APC activation. Can also bind directly to the APC to inhibit substrate-binding. Required to arrest unfertilized eggs at metaphase of meiosis II, by preventing their release from metaphase of meiosis II, through inhibition of APC-dependent cyclin B destruction leading to stabilization of cyclin B-cdk1 complex activity. This chain is F-box only protein 5-B (fbxo5-b), found in Xenopus laevis (African clawed frog).